Consider the following 356-residue polypeptide: Cell division control protein 10 (356 aa).

The 251-residue stretch at 36–286 (KGFELNVLVV…NNYRKKIFEI (251 aa)) folds into the Septin-type G domain. Residues 46-53 (GRRGLGTS) form a G1 motif region. GTP is bound by residues 46 to 53 (GRRGLGTS) and T70. Residues 93 to 96 (TYHE) are G3 motif. The segment at 163-166 (PKAD) is G4 motif. GTP contacts are provided by residues 164-172 (KADMYTPDE) and R235.

Belongs to the TRAFAC class TrmE-Era-EngA-EngB-Septin-like GTPase superfamily. Septin GTPase family. As to quaternary structure, component of the septin complex.

Its function is as follows. Septins are GTPases involved in cytokinesis. The septins localize to the site of cleavage and act as a structural scaffold that recruits different components involved in diverse processes at specific stages during the cell cycle. Septins are also involved in cell morphogenesis, chitin deposition, cell cycle regulation, cell compartmentalization and spore wall formation. In Encephalitozoon cuniculi (strain GB-M1) (Microsporidian parasite), this protein is Cell division control protein 10 (CDC10).